Here is a 504-residue protein sequence, read N- to C-terminus: Cytochrome P450 monooxygenase gliF (504 aa).

The helical transmembrane segment at 13-31 (AVAVSFGVGLLYWVYRLLL) threads the bilayer. N-linked (GlcNAc...) asparagine glycosylation is found at Asn197 and Asn299. Cys449 is a binding site for heme.

This sequence belongs to the cytochrome P450 family. Heme is required as a cofactor.

The protein localises to the membrane. It participates in mycotoxin biosynthesis. In terms of biological role, cytochrome P450 monooxygenase; part of the gene cluster that mediates the biosynthesis of gliotoxin, a member of the epipolythiodioxopiperazine (ETP) class of toxins characterized by a disulfide bridged cyclic dipeptide. The first step in gliotoxin biosynthesis is the condensation of serine and phenylalanine to form the cyclo-L-phenylalanyl-L-serine diketopiperazine (DKP) by the NRPS gliP. GliP is also able to produce the DKP cyclo-L-tryptophanyl-L-serine, suggesting that the substrate specificity of the first adenylation (A) domain in gliP is sufficiently relaxed to accommodate both L-Phe and L-Trp. The cytochrome P450 monooxygenase gliC has been shown to catalyze the subsequent hydroxylation of the alpha-carbon of L-Phe in cyclo-L-phenylalanyl-L-serine whereas the second cytochrome P450 enzyme, gliF, is presumably involved in the modification of the DKP side chain. The glutathione S-transferase (GST) gliG then forms a bis-glutathionylated biosynthetic intermediate which is responsible for the sulfurization of gliotoxin. This bis-glutathionylated intermediate is subsequently processed by the gamma-glutamyl cyclotransferase gliK to remove both gamma-glutamyl moieties. Subsequent processing via gliI yields a biosynthetic intermediate, which is N-methylated via the N-methyltransferase gliN, before the gliotoxin oxidoreductase gliT-mediated disulfide bridge closure. GliN-mediated amide methylation confers stability to ETP, damping the spontaneous formation of tri- and tetrasulfides. Intracellular dithiol gliotoxin oxidized by gliT is subsequently effluxed by gliA. Gliotoxin contributes to pathogenesis during invasive aspergillosis. In macrophages and neutrophils, gliotoxin showed inhibition of various different cell functions including cytokine production, antigen presentation, phagocytosis, and production of reactive oxygen species. The protein is Cytochrome P450 monooxygenase gliF of Aspergillus fumigatus (strain ATCC MYA-4609 / CBS 101355 / FGSC A1100 / Af293) (Neosartorya fumigata).